Here is a 697-residue protein sequence, read N- to C-terminus: uncharacterized protein (697 aa).

The stretch at 516–545 (ADQSQNDVVALSSRIDRLTQEVVALQNSEK) forms a coiled coil.

This is an uncharacterized protein from Callospermophilus lateralis (Golden-mantled ground squirrel).